Consider the following 359-residue polypeptide: 4-galactosyl-N-acetylglucosaminide 3-alpha-L-fucosyltransferase 9 (359 aa).

Topologically, residues 1 to 11 (MTSASKGILRP) are cytoplasmic. Residues 12-32 (FLIVCIILACSMVCLFIYIKP) form a helical; Signal-anchor for type II membrane protein membrane-spanning segment. Residues 33 to 359 (TNSWIFSPME…VGNLEKWFWN (327 aa)) are Lumenal-facing. Asn-62 is a glycosylation site (N-linked (GlcNAc...) asparagine). The segment at 63–168 (ETTILIWVWP…RRDSDIQVPY (106 aa)) is acceptor-binding. Gln-75 serves as a coordination point for a beta-D-galactosyl-(1-&gt;4)-N-acetyl-beta-D-glucosaminyl derivative. 3 disulfide bridges follow: Cys-82-Cys-335, Cys-91-Cys-338, and Cys-190-Cys-238. Asn-101 carries an N-linked (GlcNAc...) asparagine glycan. Glu-137 serves as a coordination point for a beta-D-galactosyl-(1-&gt;4)-N-acetyl-beta-D-glucosaminyl derivative. Catalysis depends on Glu-137, which acts as the Nucleophile. Glu-137 is a GDP-beta-L-fucose binding site. The N-linked (GlcNAc...) asparagine glycan is linked to Asn-153. GDP-beta-L-fucose-binding residues include Tyr-168, Val-192, Ser-194, Asn-195, Arg-202, Val-226, Tyr-241, Asn-246, Tyr-252, Glu-255, and Lys-256. A donor-binding region spans residues 169–326 (GFLTVSTNPF…NWRKDFTVNL (158 aa)). Residues 327-359 (PRFWESHACLACDHVKRHQEYKSVGNLEKWFWN) are acceptor-binding.

The protein belongs to the glycosyltransferase 10 family. As to quaternary structure, homodimer. In terms of processing, N-glycosylated with complex-type N-glycans.

It localises to the golgi apparatus. Its subcellular location is the trans-Golgi network membrane. It is found in the golgi apparatus membrane. It catalyses the reaction a beta-D-galactosyl-(1-&gt;4)-N-acetyl-beta-D-glucosaminyl derivative + GDP-beta-L-fucose = a beta-D-galactosyl-(1-&gt;4)-[alpha-L-fucosyl-(1-&gt;3)]-N-acetyl-beta-D-glucosaminyl derivative + GDP + H(+). The catalysed reaction is an alpha-Neu5Ac-(2-&gt;3)-beta-D-Gal-(1-&gt;4)-beta-D-GlcNAc-(1-&gt;3)-beta-D-Gal-(1-&gt;4)-beta-D-GlcNAc derivative + GDP-beta-L-fucose = an alpha-Neu5Ac-(2-&gt;3)-beta-D-Gal-(1-&gt;4)-beta-D-GlcNAc-(1-&gt;3)-beta-D-Gal-(1-&gt;4)-[alpha-L-Fuc-(1-&gt;3)]-beta-D-GlcNAc derivative + GDP + H(+). The enzyme catalyses alpha-N-glycoloylneuraminosyl-(2-&gt;3)-beta-D-galactosyl-(1-&gt;4)-N-acetyl-beta-D-glucosaminyl-(1-&gt;3)-beta-D-galactosyl-(1-&gt;4)-N-acetyl-beta-D-glucosaminyl-(1-&gt;3)-beta-D-galactosyl-(1-&gt;4)-beta-D-glucosyl-(1&lt;-&gt;1')-ceramide + GDP-beta-L-fucose = alpha-N-glycoloylneuraminosyl-(2-&gt;3)-beta-D-galactosyl-(1-&gt;4)-N-acetyl-beta-D-glucosaminyl-(1-&gt;3)-beta-D-galactosyl-(1-&gt;4)-[alpha-L-fucosyl-(1-&gt;3)]-N-acetyl-beta-D-glucosaminyl-(1-&gt;3)-beta-D-galactosyl-(1-&gt;4)-beta-D-glucosyl-(1&lt;-&gt;1')-ceramide + GDP + H(+). It carries out the reaction alpha-D-galactosyl-(1-&gt;3)-beta-D-galactosyl-(1-&gt;4)-N-acetyl-beta-D-glucosaminyl-(1-&gt;3)-beta-D-galactosyl-(1-&gt;4)-beta-D-glucosyl-(1&lt;-&gt;1')-ceramide + GDP-beta-L-fucose = a neolactoside IV(3)-alpha-Gal,III(3)-alpha-Fuc-nLc4Cer + GDP + H(+). It catalyses the reaction a neolactoside nLc4Cer + GDP-beta-L-fucose = a neolactoside III(3)-alpha-Fuc-nLc4Cer + GDP + H(+). The catalysed reaction is an N-acetyl-alpha-neuraminyl-(2-&gt;3)-beta-D-galactosyl-(1-&gt;4)-N-acetyl-beta-D-glucosaminyl derivative + GDP-beta-L-fucose = an alpha-Neu5Ac-(2-&gt;3)-beta-D-Gal-(1-&gt;4)-[alpha-L-Fuc-(1-&gt;3)]-beta-D-GlcNAc derivative + GDP + H(+). The enzyme catalyses beta-D-Gal-(1-&gt;4)-beta-D-GlcNAc-(1-&gt;3)-beta-D-Gal-(1-&gt;4)-D-Glc + GDP-beta-L-fucose = beta-D-Gal-(1-&gt;4)-[alpha-L-Fuc-(1-&gt;3)]-beta-D-GlcNAc-(1-&gt;3)-beta-D-Gal-(1-&gt;4)-D-Glc + GDP + H(+). It carries out the reaction an alpha-L-Fuc-(1-&gt;2)-beta-D-Gal-(1-&gt;4)-beta-D-GlcNAc derivative + GDP-beta-L-fucose = an alpha-L-Fuc-(1-&gt;2)-beta-D-Gal-(1-&gt;4)-[alpha-L-Fuc-(1-&gt;3)]-beta-D-GlcNAc derivative + GDP + H(+). It participates in protein modification; protein glycosylation. Its pathway is glycolipid biosynthesis. With respect to regulation, activated by Mn2+. Functionally, catalyzes alpha(1-&gt;3) linkage of fucosyl moiety transferred from GDP-beta-L-fucose to N-acetyl glucosamine (GlcNAc) within type 2 lactosamine (LacNAc, beta-D-Gal-(1-&gt;4)-beta-D-GlcNAc-) glycan attached to glycolipids and N- or O-linked glycoproteins. Fucosylates distal type 2 LacNAc and its fucosylated (H-type 2 LacNAc) and sialylated (sialyl-type 2 LacNAc) derivatives to form Lewis x (Lex) (CD15) and Lewis y (Ley) antigenic epitopes involved in cell adhesion and differentiation. Generates Lex epitopes in the brain, presumably playing a role in the maintenance of neuronal stemness and neurite outgrowth in progenitor neural cells. Fucosylates the internal type 2 LacNAc unit of the polylactosamine chain to form VIM-2 antigen that serves as recognition epitope for SELE. Can also modify milk oligosaccharides in particular type 2 tetrasaccharide LNnT. In Bos taurus (Bovine), this protein is 4-galactosyl-N-acetylglucosaminide 3-alpha-L-fucosyltransferase 9.